Consider the following 483-residue polypeptide: Glutamyl-tRNA(Gln) amidotransferase subunit A (483 aa).

Catalysis depends on charge relay system residues Lys77 and Ser152. Ser176 (acyl-ester intermediate) is an active-site residue.

This sequence belongs to the amidase family. GatA subfamily. Heterotrimer of A, B and C subunits.

The catalysed reaction is L-glutamyl-tRNA(Gln) + L-glutamine + ATP + H2O = L-glutaminyl-tRNA(Gln) + L-glutamate + ADP + phosphate + H(+). Functionally, allows the formation of correctly charged Gln-tRNA(Gln) through the transamidation of misacylated Glu-tRNA(Gln) in organisms which lack glutaminyl-tRNA synthetase. The reaction takes place in the presence of glutamine and ATP through an activated gamma-phospho-Glu-tRNA(Gln). The chain is Glutamyl-tRNA(Gln) amidotransferase subunit A from Listeria monocytogenes serovar 1/2a (strain ATCC BAA-679 / EGD-e).